The following is a 52-amino-acid chain: ATP synthase protein 8 (52 aa).

The helical transmembrane segment at 7–23 threads the bilayer; the sequence is MMWFSLFIMFSMTMMLF.

The protein belongs to the ATPase protein 8 family. As to quaternary structure, F-type ATPases have 2 components, CF(1) - the catalytic core - and CF(0) - the membrane proton channel.

Its subcellular location is the mitochondrion membrane. Its function is as follows. Mitochondrial membrane ATP synthase (F(1)F(0) ATP synthase or Complex V) produces ATP from ADP in the presence of a proton gradient across the membrane which is generated by electron transport complexes of the respiratory chain. F-type ATPases consist of two structural domains, F(1) - containing the extramembraneous catalytic core and F(0) - containing the membrane proton channel, linked together by a central stalk and a peripheral stalk. During catalysis, ATP synthesis in the catalytic domain of F(1) is coupled via a rotary mechanism of the central stalk subunits to proton translocation. Part of the complex F(0) domain. Minor subunit located with subunit a in the membrane. The protein is ATP synthase protein 8 (MT-ATP8) of Locusta migratoria (Migratory locust).